A 792-amino-acid polypeptide reads, in one-letter code: Serine/threonine-protein kinase Nek4 (792 aa).

Positions 6-261 (YCYMRVVGRG…VRSILRQPYI (256 aa)) constitute a Protein kinase domain. Residues 12–20 (VGRGSYGEV) and Lys35 contribute to the ATP site. Asp131 serves as the catalytic Proton acceptor. A Phosphothreonine; by autocatalysis modification is found at Thr165. 4 disordered regions span residues 329–358 (QEKP…NTGE), 379–515 (ANAG…LPSY), 527–611 (QQND…SITQ), and 628–657 (LSED…TNEM). Residues Ser340 and Ser343 each carry the phosphoserine modification. Composition is skewed to polar residues over residues 412-421 (QGNTKSSDQP), 456-467 (DQVTGIIENQDS), 473-484 (QPHSSMSEPSLS), 496-505 (AHSGTKSQFQ), and 541-551 (VNSSRTSSTAS). Residue Lys566 is modified to N6-methyllysine. Residues 602 to 611 (RFSSDCSITQ) show a composition bias toward polar residues. Positions 641–657 (DKSDGDSREGKSHTNEM) are enriched in basic and acidic residues. Residue Ser675 is modified to Phosphoserine.

This sequence belongs to the protein kinase superfamily. NEK Ser/Thr protein kinase family. NIMA subfamily. The cofactor is Mn(2+). As to expression, expressed ubiquitously among various organs and is up-regulated in the testis.

It localises to the cytoplasm. The protein localises to the cell projection. Its subcellular location is the cilium. It carries out the reaction L-seryl-[protein] + ATP = O-phospho-L-seryl-[protein] + ADP + H(+). The catalysed reaction is L-threonyl-[protein] + ATP = O-phospho-L-threonyl-[protein] + ADP + H(+). Required for normal entry into proliferative arrest after a limited number of cell divisions, also called replicative senescence. Required for normal cell cycle arrest in response to double-stranded DNA damage. Protein kinase that seems to act exclusively upon threonine residues. In Mus musculus (Mouse), this protein is Serine/threonine-protein kinase Nek4 (Nek4).